The following is a 257-amino-acid chain: Transcription factor MYB3 (257 aa).

2 HTH myb-type domains span residues 9–61 (KAHM…MNYL) and 62–116 (RPDL…KRKL). DNA-binding regions (H-T-H motif) lie at residues 37-61 (WRSLPRAAGLQRCGKSCRLRWMNYL) and 89-112 (WSLIAGRLPGRTDNEIKNYWNTHI). The Required for interaction with CPL1 signature appears at 189-193 (LNLEL).

As to quaternary structure, interacts with CPL1. In terms of tissue distribution, expressed in roots, stems, leaves, flowers and siliques.

The protein resides in the nucleus. This Arabidopsis thaliana (Mouse-ear cress) protein is Transcription factor MYB3 (MYB3).